A 365-amino-acid chain; its full sequence is D-alanine--D-alanine ligase (365 aa).

The ATP-grasp domain occupies 135-345; that stretch reads KLLLKSFNIP…YGSLVDKLIA (211 aa). An ATP-binding site is contributed by 168-223; it reads KQSLDYPVIVKPAMLGSSIGISIAYNETQIEKCIEEAFAYDLTVVIEKFMRAREIE. Mg(2+) contacts are provided by aspartate 298, glutamate 312, and asparagine 314.

Belongs to the D-alanine--D-alanine ligase family. It depends on Mg(2+) as a cofactor. Requires Mn(2+) as cofactor.

The protein resides in the cytoplasm. The catalysed reaction is 2 D-alanine + ATP = D-alanyl-D-alanine + ADP + phosphate + H(+). Its pathway is cell wall biogenesis; peptidoglycan biosynthesis. Functionally, cell wall formation. This chain is D-alanine--D-alanine ligase, found in Borrelia turicatae (strain 91E135).